The following is a 259-amino-acid chain: Thiazole synthase (259 aa).

Lys98 serves as the catalytic Schiff-base intermediate with DXP. 1-deoxy-D-xylulose 5-phosphate contacts are provided by residues Gly159, 185 to 186, and 207 to 208; these read AG and NS.

Belongs to the ThiG family. As to quaternary structure, homotetramer. Forms heterodimers with either ThiH or ThiS.

It is found in the cytoplasm. The enzyme catalyses [ThiS sulfur-carrier protein]-C-terminal-Gly-aminoethanethioate + 2-iminoacetate + 1-deoxy-D-xylulose 5-phosphate = [ThiS sulfur-carrier protein]-C-terminal Gly-Gly + 2-[(2R,5Z)-2-carboxy-4-methylthiazol-5(2H)-ylidene]ethyl phosphate + 2 H2O + H(+). Its pathway is cofactor biosynthesis; thiamine diphosphate biosynthesis. In terms of biological role, catalyzes the rearrangement of 1-deoxy-D-xylulose 5-phosphate (DXP) to produce the thiazole phosphate moiety of thiamine. Sulfur is provided by the thiocarboxylate moiety of the carrier protein ThiS. In vitro, sulfur can be provided by H(2)S. In Chlorobium phaeobacteroides (strain DSM 266 / SMG 266 / 2430), this protein is Thiazole synthase.